A 464-amino-acid polypeptide reads, in one-letter code: Protein FAM90A16 (464 aa).

3 disordered regions span residues 1 to 42 (MMAR…DPRL), 70 to 389 (PATL…HDGA), and 415 to 437 (HSPE…SEAP). 2 stretches are compositionally biased toward basic and acidic residues: residues 74–89 (GKKE…KPRV) and 97–114 (NKDK…DPQR). Residues 180–197 (LASLSPLRKASLSSSSSL) show a composition bias toward low complexity.

This sequence belongs to the FAM90 family.

The polypeptide is Protein FAM90A16 (Homo sapiens (Human)).